A 90-amino-acid polypeptide reads, in one-letter code: Acylphosphatase (90 aa).

The region spanning 3–90 is the Acylphosphatase-like domain; the sequence is QYHMIADGRV…KGYRTFSISY (88 aa). Residues arginine 18 and asparagine 36 contribute to the active site.

It belongs to the acylphosphatase family.

The catalysed reaction is an acyl phosphate + H2O = a carboxylate + phosphate + H(+). This chain is Acylphosphatase (acyP), found in Bacillus velezensis (strain DSM 23117 / BGSC 10A6 / LMG 26770 / FZB42) (Bacillus amyloliquefaciens subsp. plantarum).